A 604-amino-acid polypeptide reads, in one-letter code: FAD-linked oxidoreductase easE (604 aa).

A signal peptide spans 1 to 25 (MQFLLWSTGLVALLSWLIYTQETQS). Residues Asn-47, Asn-70, Asn-106, and Asn-196 are each glycosylated (N-linked (GlcNAc...) asparagine). The FAD-binding PCMH-type domain maps to 125–308 (QGRIPLFTVG…TRATMRVFPD (184 aa)).

Belongs to the oxygen-dependent FAD-linked oxidoreductase family. The cofactor is FAD.

It participates in alkaloid biosynthesis; ergot alkaloid biosynthesis. In terms of biological role, FAD-linked oxidoreductase; part of the gene cluster that mediates the biosynthesis of fungal ergot alkaloid. DmaW catalyzes the first step of ergot alkaloid biosynthesis by condensing dimethylallyl diphosphate (DMAP) and tryptophan to form 4-dimethylallyl-L-tryptophan. The second step is catalyzed by the methyltransferase easF that methylates 4-dimethylallyl-L-tryptophan in the presence of S-adenosyl-L-methionine, resulting in the formation of 4-dimethylallyl-L-abrine. The catalase easC and the FAD-dependent oxidoreductase easE then transform 4-dimethylallyl-L-abrine to chanoclavine-I which is further oxidized by easD in the presence of NAD(+), resulting in the formation of chanoclavine-I aldehyde. Chanoclavine-I aldehyde is the precursor of ergoamides and ergopeptines in Clavicipitaceae, and clavine-type alcaloids such as fumiclavine in Trichocomaceae. However, the metabolites downstream of chanoclavine-I aldehyde in Arthrodermataceae have not been identified yet. This Trichophyton verrucosum (strain HKI 0517) protein is FAD-linked oxidoreductase easE.